The sequence spans 594 residues: Spindle pole body-associated protein CIK1 (594 aa).

A disordered region spans residues 1–29; that stretch reads MNNSKIPKLSFHSDPNNVTRDFPKTKRQK. The stretch at 81-360 forms a coiled coil; it reads IERVKNNERK…VNELEKVQQE (280 aa).

As to quaternary structure, interacts with KAR3; the interaction is direct.

The protein localises to the nucleus. The protein resides in the cytoplasm. It localises to the cytoskeleton. It is found in the microtubule organizing center. Its subcellular location is the spindle pole body. The protein localises to the spindle. In terms of biological role, together with the minus end-directed microtubule motor KAR3, involved in spindle midzone assembly, karyogamy (nuclear fusion) during mating, and with an essential function in meiosis I. To contribute to spindle midzone assembly during mitotic metaphase, the KAR3-CIK1 motor cross-links anti-parallel microtubules to align them on the spindle axis; as the motor travels polewards splayed microtubules are pulled into alignment. During the karyogamy (nuclear fusion) step of mating, KAR3-CIK1 cross-links antiparallel cytoplasmic microtubules emanating from the spindle pole bodies of mating partners; the motor activity of KAR3 creates the force that pulls the nuclei together by sliding cross-linked microtubules past one another. KAR3-CIK1 promotes microtubule shortening predominantly from the microtubule plus-end. Required for interhomolog recombination, synapsis of homologous chromosomes and establishment of a meiosis I spindle. The chain is Spindle pole body-associated protein CIK1 (CIK1) from Saccharomyces cerevisiae (strain ATCC 204508 / S288c) (Baker's yeast).